We begin with the raw amino-acid sequence, 72 residues long: Phycobilisome 37.5 kDa linker polypeptide, phycocyanin-associated, rod (72 aa).

One can recognise a PBS-linker domain in the interval 1 to 72; it reads MTSSAAAIRL…ASGNISVREF (72 aa).

It belongs to the phycobilisome linker protein family.

It localises to the cellular thylakoid membrane. In terms of biological role, rod linker protein, associated with phycocyanin. Linker polypeptides determine the state of aggregation and the location of the disk-shaped phycobiliprotein units within the phycobilisome and modulate their spectroscopic properties in order to mediate a directed and optimal energy transfer. The protein is Phycobilisome 37.5 kDa linker polypeptide, phycocyanin-associated, rod (cpcH2) of Pseudanabaena tenuis (strain PCC 7409).